The chain runs to 125 residues: Nuclear envelope phosphatase-regulatory subunit 1 (125 aa).

An N-acetylmethionine modification is found at methionine 1. The next 2 membrane-spanning stretches (helical) occupy residues 33 to 53 (MLLIVVSVCTATGAWNWLIDP) and 65 to 85 (WNHPFFTISCITLIGLFFAGI).

This sequence belongs to the CNEP1R1 family. As to quaternary structure, interacts with CTDNEP1; the complex dephosphorylates LPIN1 and LPIN2.

It localises to the nucleus membrane. Its subcellular location is the cytoplasm. In terms of biological role, forms with the serine/threonine protein phosphatase CTDNEP1 an active complex which dephosphorylates and may activate LPIN1 and LPIN2. LPIN1 and LPIN2 are phosphatidate phosphatases that catalyze the conversion of phosphatidic acid to diacylglycerol and control the metabolism of fatty acids at different levels. May indirectly modulate the lipid composition of nuclear and/or endoplasmic reticulum membranes and be required for proper nuclear membrane morphology and/or dynamics. May also indirectly regulate the production of lipid droplets and triacylglycerol. This chain is Nuclear envelope phosphatase-regulatory subunit 1 (CNEP1R1), found in Bos taurus (Bovine).